A 345-amino-acid chain; its full sequence is N-glycosylase/DNA lyase (345 aa).

Residues Asn149, Arg154, and Arg204 each contribute to the DNA site. Lys249 (schiff-base intermediate with DNA) is an active-site residue. Residues Pro266 and Asp268 each coordinate 8-oxoguanine. 2 residues coordinate DNA: His270 and Gln287. The 8-oxoguanine site is built by Gln315 and Phe319.

The protein belongs to the type-1 OGG1 family. As to expression, highest expression in testis.

It is found in the nucleus. It localises to the nucleoplasm. The protein localises to the nucleus speckle. The protein resides in the nucleus matrix. The enzyme catalyses 2'-deoxyribonucleotide-(2'-deoxyribose 5'-phosphate)-2'-deoxyribonucleotide-DNA = a 3'-end 2'-deoxyribonucleotide-(2,3-dehydro-2,3-deoxyribose 5'-phosphate)-DNA + a 5'-end 5'-phospho-2'-deoxyribonucleoside-DNA + H(+). Functionally, DNA repair enzyme that incises DNA at 8-oxoG residues. Excises 7,8-dihydro-8-oxoguanine and 2,6-diamino-4-hydroxy-5-N-methylformamidopyrimidine (FAPY) from damaged DNA. Has a beta-lyase activity that nicks DNA 3' to the lesion. This chain is N-glycosylase/DNA lyase (Ogg1), found in Mus musculus (Mouse).